A 62-amino-acid polypeptide reads, in one-letter code: Small ribosomal subunit protein bS21 (62 aa).

Residues 43–62 form a disordered region; it reads EKRKRKAMALQKQRKRRSRY. Over residues 44–62 the composition is skewed to basic residues; that stretch reads KRKRKAMALQKQRKRRSRY.

Belongs to the bacterial ribosomal protein bS21 family.

This Trichodesmium erythraeum (strain IMS101) protein is Small ribosomal subunit protein bS21.